The primary structure comprises 301 residues: 3-methyl-2-oxobutanoate hydroxymethyltransferase (301 aa).

Residues 1 to 12 (MAPSNLPESTTP) show a composition bias toward polar residues. The interval 1–24 (MAPSNLPESTTPAEVPAPYGTGPA) is disordered. Positions 82 and 121 each coordinate Mg(2+). 3-methyl-2-oxobutanoate contacts are provided by residues 82 to 83 (DS), Asp121, and Lys151. Glu153 is a Mg(2+) binding site. Glu219 (proton acceptor) is an active-site residue.

The protein belongs to the PanB family. As to quaternary structure, homodecamer; pentamer of dimers. Mg(2+) is required as a cofactor.

It localises to the cytoplasm. The enzyme catalyses 3-methyl-2-oxobutanoate + (6R)-5,10-methylene-5,6,7,8-tetrahydrofolate + H2O = 2-dehydropantoate + (6S)-5,6,7,8-tetrahydrofolate. It participates in cofactor biosynthesis; (R)-pantothenate biosynthesis; (R)-pantoate from 3-methyl-2-oxobutanoate: step 1/2. Catalyzes the reversible reaction in which hydroxymethyl group from 5,10-methylenetetrahydrofolate is transferred onto alpha-ketoisovalerate to form ketopantoate. In Paenarthrobacter aurescens (strain TC1), this protein is 3-methyl-2-oxobutanoate hydroxymethyltransferase.